The chain runs to 132 residues: MTMTDPIADMLTRVRNANMVRHEKLELPASNIKKEIAEILKSEGFIKNVEYVEDDKQGVIRLFLKYGQNNERVITGLKRISKPGLRVYAKANEVPKVLNGLGIALVSTSEGVITDKEARKRNVGGEIIAYVW.

Belongs to the universal ribosomal protein uS8 family. As to quaternary structure, part of the 30S ribosomal subunit. Contacts proteins S5 and S12.

Its function is as follows. One of the primary rRNA binding proteins, it binds directly to 16S rRNA central domain where it helps coordinate assembly of the platform of the 30S subunit. The sequence is that of Small ribosomal subunit protein uS8 from Staphylococcus epidermidis (strain ATCC 35984 / DSM 28319 / BCRC 17069 / CCUG 31568 / BM 3577 / RP62A).